Here is a 265-residue protein sequence, read N- to C-terminus: Phosphatidylserine decarboxylase proenzyme (265 aa).

Ser-183 functions as the Schiff-base intermediate with substrate; via pyruvic acid in the catalytic mechanism. A Pyruvic acid (Ser); by autocatalysis modification is found at Ser-183. The disordered stretch occupies residues 216–246; it reads TAPQTESEPESEPALQTAPVETAANPSAEQR.

This sequence belongs to the phosphatidylserine decarboxylase family. PSD-A subfamily. Heterodimer of a large membrane-associated beta subunit and a small pyruvoyl-containing alpha subunit. Requires pyruvate as cofactor. In terms of processing, is synthesized initially as an inactive proenzyme. Formation of the active enzyme involves a self-maturation process in which the active site pyruvoyl group is generated from an internal serine residue via an autocatalytic post-translational modification. Two non-identical subunits are generated from the proenzyme in this reaction, and the pyruvate is formed at the N-terminus of the alpha chain, which is derived from the carboxyl end of the proenzyme. The post-translation cleavage follows an unusual pathway, termed non-hydrolytic serinolysis, in which the side chain hydroxyl group of the serine supplies its oxygen atom to form the C-terminus of the beta chain, while the remainder of the serine residue undergoes an oxidative deamination to produce ammonia and the pyruvoyl prosthetic group on the alpha chain.

It is found in the cell membrane. The enzyme catalyses a 1,2-diacyl-sn-glycero-3-phospho-L-serine + H(+) = a 1,2-diacyl-sn-glycero-3-phosphoethanolamine + CO2. Its pathway is phospholipid metabolism; phosphatidylethanolamine biosynthesis; phosphatidylethanolamine from CDP-diacylglycerol: step 2/2. Its function is as follows. Catalyzes the formation of phosphatidylethanolamine (PtdEtn) from phosphatidylserine (PtdSer). The chain is Phosphatidylserine decarboxylase proenzyme from Neisseria meningitidis serogroup B (strain ATCC BAA-335 / MC58).